A 536-amino-acid chain; its full sequence is Glucan 1,6-alpha-glucosidase (536 aa).

Catalysis depends on Asp194, which acts as the Nucleophile. Glu236 serves as the catalytic Proton donor.

This sequence belongs to the glycosyl hydrolase 13 family.

The protein localises to the cytoplasm. The enzyme catalyses Hydrolysis of (1-&gt;6)-alpha-D-glucosidic linkages in (1-&gt;6)-alpha-D-glucans and derived oligosaccharides.. The physiological substrates may be short isomaltosaccharides. This is Glucan 1,6-alpha-glucosidase (dexB) from Streptococcus mutans serotype c (strain ATCC 700610 / UA159).